The primary structure comprises 361 residues: 3-dehydroquinate synthase (361 aa).

The protein belongs to the archaeal-type DHQ synthase family.

It carries out the reaction 2-amino-2,3,7-trideoxy-D-lyxo-hept-6-ulosonate + NAD(+) + H2O = 3-dehydroquinate + NH4(+) + NADH + H(+). Functionally, catalyzes the oxidative deamination and cyclization of 2-amino-3,7-dideoxy-D-threo-hept-6-ulosonic acid (ADH) to yield 3-dehydroquinate (DHQ), which is fed into the canonical shikimic pathway of aromatic amino acid biosynthesis. This chain is 3-dehydroquinate synthase, found in Methanococcus maripaludis (strain DSM 14266 / JCM 13030 / NBRC 101832 / S2 / LL).